Reading from the N-terminus, the 830-residue chain is Nucleolar complex-associated protein 3 (830 aa).

5 disordered regions span residues 1 to 22 (MGKN…DVAE), 67 to 86 (KYEE…GNGE), 112 to 169 (KSKL…EETP), 391 to 436 (GKPN…KIRD), and 802 to 830 (LQSE…KKQI). Coiled-coil stretches lie at residues 61–81 (VMTV…LQEE) and 111–156 (KKSK…HEKD). Over residues 67–84 (KYEEERSKRKTLQEEKGN) the composition is skewed to basic and acidic residues. Over residues 118–129 (AETDEAEKDVLE) the composition is skewed to acidic residues. Positions 130 to 140 (DEHVLNKSQRR) are enriched in basic and acidic residues. A Nuclear localization signal 1 motif is present at residues 138–145 (QRREKAKK). The segment covering 141–150 (EKAKKSKREA) has biased composition (basic residues). Acidic residues predominate over residues 159 to 168 (DEILQEEEET). Over residues 391–400 (GKPNKEDEHN) the composition is skewed to basic and acidic residues. Positions 400–429 (NKKYKKNNKRKTQEEQNQVQENERKKSKKD) form a coiled coil. The short motif at 408-415 (KRKTQEEQ) is the Nuclear localization signal 2 element. Over residues 420-436 (ENERKKSKKDMMSKIRD) the composition is skewed to basic and acidic residues. Positions 806-813 (EKKPLKKQ) match the Nuclear localization signal 3 motif. Over residues 817 to 830 (VKKKLKNPKSKKQI) the composition is skewed to basic residues.

It belongs to the CBF/MAK21 family. Component of nucleolar complexes. Interacts with RBL and NOC2 in both the nucleolus and nucleoplasm.

Its subcellular location is the nucleus. It localises to the nucleolus. The protein resides in the nucleoplasm. Functionally, may be required for synthesis of 60S ribosomal subunits and the transport of pre-ribosomes from the nucleoplasm to the cytoplasm. Also required for initiation of DNA replication. This Arabidopsis thaliana (Mouse-ear cress) protein is Nucleolar complex-associated protein 3.